Consider the following 39-residue polypeptide: U-limacoditoxin(13)-As54 (39 aa).

The signal sequence occupies residues 1 to 23; the sequence is MSKYIVLLVVSAIALLQFSMIEC. Position 37 is a phenylalanine amide (Phe37).

The protein belongs to the FARP (FMRFamide related peptide) family. Expressed by the venom secretory cell of the spine. The spine is a cuticular structure containing a single large nucleated venom-secreting cell at its base. It is an independent unit capable of producing, storing and injecting venom. On the back of A.stimulea caterpillars, spines are grouped together by 50 to 100 to form scoli, of which there are eight.

The protein localises to the secreted. In terms of biological role, strongly activates (at 30 uM) the human neuropeptide FF receptor 1 (NPFF1R), a G-protein coupled receptor, with an effect that is equipotent to the endogenous RFRP-1 ligand in activating NPFFR1. Is toxic when injected into Drosophila melanogaster. Also shows a moderate anthelmintic activity against the parasitic nematode H.contortus (drug susceptible Kirby isolate) (IC(50)=20.1 uM). This Acharia stimulea (Saddleback caterpillar moth) protein is U-limacoditoxin(13)-As54.